A 308-amino-acid chain; its full sequence is Bacitracin transport ATP-binding protein BcrA (308 aa).

The region spanning 8 to 236 (IETENLTKQY…NRKYTEFDVS (229 aa)) is the ABC transporter domain. Residue 40–47 (GRNGAGKT) participates in ATP binding.

The protein belongs to the ABC transporter superfamily. As to quaternary structure, the complex is probably composed of two ATP-binding proteins (BcrA) and two transmembrane proteins (BcrB).

Its function is as follows. Essential for high-level bacitracin resistance. Part of the ABC transporter complex BcrAB. Probably responsible for energy coupling to the transport system. The chain is Bacitracin transport ATP-binding protein BcrA from Enterococcus faecalis (Streptococcus faecalis).